Reading from the N-terminus, the 249-residue chain is ATP synthase subunit a (249 aa).

6 helical membrane passes run Phe-26–Leu-46, Phe-84–Phe-104, Ile-114–Trp-134, Leu-143–Ile-163, Ile-185–Ala-205, and Ala-208–Leu-228.

The protein belongs to the ATPase A chain family. As to quaternary structure, F-type ATPases have 2 components, CF(1) - the catalytic core - and CF(0) - the membrane proton channel. CF(1) has five subunits: alpha(3), beta(3), gamma(1), delta(1), epsilon(1). CF(0) has three main subunits: a(1), b(2) and c(9-12). The alpha and beta chains form an alternating ring which encloses part of the gamma chain. CF(1) is attached to CF(0) by a central stalk formed by the gamma and epsilon chains, while a peripheral stalk is formed by the delta and b chains.

Its subcellular location is the cell inner membrane. Key component of the proton channel; it plays a direct role in the translocation of protons across the membrane. The sequence is that of ATP synthase subunit a from Chelativorans sp. (strain BNC1).